Consider the following 134-residue polypeptide: Profilin-3 (134 aa).

Cysteine 13 and cysteine 118 form a disulfide bridge. The Involved in PIP2 interaction motif lies at 84–100 (AVIRGKKGSGGITIKKT).

Belongs to the profilin family. In terms of assembly, occurs in many kinds of cells as a complex with monomeric actin in a 1:1 ratio. Post-translationally, phosphorylated by MAP kinases.

The protein resides in the cytoplasm. It localises to the cytoskeleton. Binds to actin and affects the structure of the cytoskeleton. At high concentrations, profilin prevents the polymerization of actin, whereas it enhances it at low concentrations. The sequence is that of Profilin-3 from Olea europaea (Common olive).